The chain runs to 320 residues: UDP-3-O-acyl-N-acetylglucosamine deacetylase (320 aa).

Zn(2+) contacts are provided by histidine 92, histidine 251, and aspartate 255. Histidine 278 (proton donor) is an active-site residue.

The protein belongs to the LpxC family. Requires Zn(2+) as cofactor.

It catalyses the reaction a UDP-3-O-[(3R)-3-hydroxyacyl]-N-acetyl-alpha-D-glucosamine + H2O = a UDP-3-O-[(3R)-3-hydroxyacyl]-alpha-D-glucosamine + acetate. Its pathway is glycolipid biosynthesis; lipid IV(A) biosynthesis; lipid IV(A) from (3R)-3-hydroxytetradecanoyl-[acyl-carrier-protein] and UDP-N-acetyl-alpha-D-glucosamine: step 2/6. In terms of biological role, catalyzes the hydrolysis of UDP-3-O-myristoyl-N-acetylglucosamine to form UDP-3-O-myristoylglucosamine and acetate, the committed step in lipid A biosynthesis. This is UDP-3-O-acyl-N-acetylglucosamine deacetylase from Psychrobacter arcticus (strain DSM 17307 / VKM B-2377 / 273-4).